The following is a 381-amino-acid chain: cAMP-dependent protein kinase type I-beta regulatory subunit (381 aa).

Positions 2-136 (ASPPACPSEE…ALAKAISKNV (135 aa)) are dimerization and phosphorylation. Ser-3 is subject to Phosphoserine. A 3'-nitrotyrosine modification is found at Tyr-21. The segment at 67-98 (ARQKSNSQSDSHDEEVSPTPPNPVVKARRRRG) is disordered. Ser-77 and Ser-83 each carry phosphoserine. Position 85 is a phosphothreonine (Thr-85). The Pseudophosphorylation motif signature appears at 96–100 (RRGGV). Arg-97 carries the omega-N-methylarginine modification. Residues 137-254 (LFAH…SKVS), Glu-202, Arg-211, 255-381 (ILES…SLTV), Glu-326, and Arg-335 contribute to the 3',5'-cyclic AMP site.

It belongs to the cAMP-dependent kinase regulatory chain family. As to quaternary structure, the inactive holoenzyme is composed of two regulatory chains and two catalytic chains. Activation by cAMP releases the two active catalytic monomers and the regulatory dimer. Interacts with PRKX; regulates this cAMP-dependent protein kinase. Interacts with C2orf88/smAKAP; this interaction may target PRKAR1B to the plasma membrane. Post-translationally, the pseudophosphorylation site binds to the substrate-binding region of the catalytic chain, resulting in the inhibition of its activity. In terms of tissue distribution, four types of regulatory chains are found: I-alpha, I-beta, II-alpha, and II-beta. Their expression varies among tissues and is in some cases constitutive and in others inducible.

The protein resides in the cell membrane. Functionally, regulatory subunit of the cAMP-dependent protein kinases involved in cAMP signaling in cells. This is cAMP-dependent protein kinase type I-beta regulatory subunit (PRKAR1B) from Homo sapiens (Human).